A 1227-amino-acid chain; its full sequence is Pentatricopeptide repeat-containing protein At5g15280, mitochondrial (1227 aa).

The transit peptide at 1 to 31 directs the protein to the mitochondrion; that stretch reads MLNLLSISSSSRLRFLNKVSSLTYHYSFAFF. PPR repeat units lie at residues 146–180, 182–216, 217–251, 255–289, 290–320, 322–356, 357–391, 392–426, 427–461, 527–561, 562–597, 598–632, 633–667, 668–698, 703–737, 738–772, 773–800, 802–836, 837–871, 872–906, 908–942, 943–977, 978–1012, 1014–1044, 1047–1081, 1082–1116, 1117–1151, and 1152–1186; these read LPQACEIMASMLIREGMVKEVELLLMEMERHGDTM, NEGIFCDLIGKYVDDFDSRKAVMLFDWMRRKGLVP, LTSCYQILIDQLVRVHRTESAYRICLDWVETRAEL, NIDSIGKVIELLCLDQKVQEARVLARKLVALGCIL, NSSIYSKITIGYNEKQDFEDLLSFIGEVKYE, DVFVGNRILHSLCRRFGSERAYVYMEELEHLGFKQ, DEVTFGILIGWCCYEGDIKRAVLYLSEIMSKGYKP, DVYSYNAILSGLFRKGLWQHTHCILDEMKENGMML, SLSTFKIMVTGYCKARQFEEAKRIVNKMFGYGLIE, VLPEFNSLIVRASEDGDLQTALRLLDEMARWGQKL, SRRSFAVLMRSLCASRAHLRVSISLLEKWPKLAYQL, DGETLNFLVQEYCKKGFSRHSKLIFHKMVQMHHPI, DNVTYTSLIRCFCKKETLNDLLNVWGAAQNDNWLP, DLNDCGDLWNCLVRKGLVEEVVQLFERVFIS, QSEACRIFVEKLTVLGFSCIAHSVVKRLEGEGCIV, EQEVYNHLIKGLCTEKKDSAAFAILDEMLDKKHIP, SLGSCLMLIPRLCRANKAGTAFNLAEQI, SSYVHYALIKGLSLAGKMLDAENQLRIMLSNGLSS, YNKIYNVMFQGYCKGNNWMKVEEVLGLMVRKNIIC, SVKSYREYVRKMCLEPQSLSAISLKEFLLLGESNP, GVIIYNMLIFYMFRAKNHLEVNKVLLEMQGRGVLP, DETTFNFLVHGYSSSADYSSSLRYLSAMISKGMKP, NNRSLRAVTSSLCDNGDVKKALDLWQVMESKGWNL, SSVVQTKIVETLISKGEIPKAEDFLTRVTRN, MAPNYDNIIKKLSDRGNLDIAVHLLNTMLKNQSIP, GSSSYDSVINGLLRYNQLDKAMDFHTEMVELGLSP, SISTWSGLVHKFCEACQVLESERLIKSMVGLGESP, and SQEMFKTVIDRFRVEKNTVKASEMMEMMQKCGYEV.

The protein belongs to the PPR family. P subfamily.

The protein localises to the mitochondrion. The polypeptide is Pentatricopeptide repeat-containing protein At5g15280, mitochondrial (Arabidopsis thaliana (Mouse-ear cress)).